A 229-amino-acid polypeptide reads, in one-letter code: Uracil-DNA glycosylase (229 aa).

The active-site Proton acceptor is the D64.

It belongs to the uracil-DNA glycosylase (UDG) superfamily. UNG family. In terms of assembly, monomer.

The protein resides in the cytoplasm. The catalysed reaction is Hydrolyzes single-stranded DNA or mismatched double-stranded DNA and polynucleotides, releasing free uracil.. Functionally, excises uracil residues from the DNA which can arise as a result of misincorporation of dUMP residues by DNA polymerase or due to deamination of cytosine. The sequence is that of Uracil-DNA glycosylase from Escherichia coli O157:H7.